Here is a 211-residue protein sequence, read N- to C-terminus: Dual specificity protein phosphatase 26 (211 aa).

In terms of domain architecture, Tyrosine-protein phosphatase spans 60-207 (NHADEVWPGL…LLALDRRLRQ (148 aa)). Cysteine 152 (phosphocysteine intermediate) is an active-site residue.

This sequence belongs to the protein-tyrosine phosphatase family. Non-receptor class dual specificity subfamily. As to quaternary structure, interacts with HSF4.

It localises to the cytoplasm. The protein localises to the nucleus. It is found in the golgi apparatus. It catalyses the reaction O-phospho-L-tyrosyl-[protein] + H2O = L-tyrosyl-[protein] + phosphate. The enzyme catalyses O-phospho-L-seryl-[protein] + H2O = L-seryl-[protein] + phosphate. It carries out the reaction O-phospho-L-threonyl-[protein] + H2O = L-threonyl-[protein] + phosphate. In terms of biological role, inactivates MAPK1 and MAPK3 which leads to dephosphorylation of heat shock factor protein 4 and a reduction in its DNA-binding activity. The protein is Dual specificity protein phosphatase 26 (Dusp26) of Rattus norvegicus (Rat).